The sequence spans 238 residues: MEEEFPTISLLGIDFNLSNILMITVTCVIVLLIAIICTRNLQRRPTGKQNFIEWVMDFVRGIINSNMDWKTGGRFHVLGITILMFVFVANMLGLPLQIAVNDEVWWRSPTADPIVTLTLAIMVLGLTHYYGIKMRGFKHYFVGTYLSPMKFLFPLKLVEEFANTLTLGLRLYGNIFAGEVLLTIIATQLAHINIFVGVLAIIPAIIWQAFSLFIGAIQAYIFTMLTMVYMSHKVSDEH.

5 helical membrane-spanning segments follow: residues L17–C37, F75–P95, D112–I132, Y172–I192, and I194–I214.

The protein belongs to the ATPase A chain family. In terms of assembly, F-type ATPases have 2 components, CF(1) - the catalytic core - and CF(0) - the membrane proton channel. CF(1) has five subunits: alpha(3), beta(3), gamma(1), delta(1), epsilon(1). CF(0) has three main subunits: a(1), b(2) and c(9-12). The alpha and beta chains form an alternating ring which encloses part of the gamma chain. CF(1) is attached to CF(0) by a central stalk formed by the gamma and epsilon chains, while a peripheral stalk is formed by the delta and b chains.

The protein resides in the cell membrane. Key component of the proton channel; it plays a direct role in the translocation of protons across the membrane. This is ATP synthase subunit a from Listeria monocytogenes serovar 1/2a (strain ATCC BAA-679 / EGD-e).